The chain runs to 238 residues: Probable transcriptional regulatory protein MGAS10750_Spy0264 (238 aa).

Belongs to the TACO1 family. YeeN subfamily.

It localises to the cytoplasm. This chain is Probable transcriptional regulatory protein MGAS10750_Spy0264, found in Streptococcus pyogenes serotype M4 (strain MGAS10750).